The following is a 331-amino-acid chain: Heme A synthase (331 aa).

Transmembrane regions (helical) follow at residues Val6–Phe26, Tyr87–Phe107, Ala124–Val144, Leu154–Asp174, Ile193–Leu213, Val251–Ile271, Leu279–Leu299, and Ile301–Leu321. Position 255 (His255) interacts with heme. His309 contributes to the heme binding site.

The protein belongs to the COX15/CtaA family. Type 2 subfamily. In terms of assembly, interacts with CtaB. The cofactor is heme b.

The protein localises to the cell membrane. The catalysed reaction is Fe(II)-heme o + 2 A + H2O = Fe(II)-heme a + 2 AH2. It functions in the pathway porphyrin-containing compound metabolism; heme A biosynthesis; heme A from heme O: step 1/1. In terms of biological role, catalyzes the conversion of heme O to heme A by two successive hydroxylations of the methyl group at C8. The first hydroxylation forms heme I, the second hydroxylation results in an unstable dihydroxymethyl group, which spontaneously dehydrates, resulting in the formyl group of heme A. In Wolbachia pipientis subsp. Culex pipiens (strain wPip), this protein is Heme A synthase.